A 92-amino-acid polypeptide reads, in one-letter code: uncharacterized protein (92 aa).

It belongs to the IUNH family.

This is an uncharacterized protein from Corynebacterium ammoniagenes (Brevibacterium ammoniagenes).